A 548-amino-acid polypeptide reads, in one-letter code: Membrane protein insertase YidC (548 aa).

Residues 6-26 form a helical membrane-spanning segment; it reads NLLVIALLFVSFMIWQAWEQD. Residues 28–55 form a disordered region; the sequence is NPQPQAQQTTQTTTTAAGSAADQGVPAS. The segment covering 30–50 has biased composition (low complexity); that stretch reads QPQAQQTTQTTTTAAGSAADQ. 4 consecutive transmembrane segments (helical) span residues 350–370, 420–440, 458–478, and 499–519; these read FVGN…GIMY, LGGC…YYML, LSAQ…MFFI, and PVIF…YYIV.

It belongs to the OXA1/ALB3/YidC family. Type 1 subfamily. As to quaternary structure, interacts with the Sec translocase complex via SecD. Specifically interacts with transmembrane segments of nascent integral membrane proteins during membrane integration.

Its subcellular location is the cell inner membrane. Functionally, required for the insertion and/or proper folding and/or complex formation of integral membrane proteins into the membrane. Involved in integration of membrane proteins that insert both dependently and independently of the Sec translocase complex, as well as at least some lipoproteins. Aids folding of multispanning membrane proteins. The polypeptide is Membrane protein insertase YidC (Shigella flexneri).